The chain runs to 49 residues: Large ribosomal subunit protein bL33 (49 aa).

It belongs to the bacterial ribosomal protein bL33 family.

The chain is Large ribosomal subunit protein bL33 from Pelotomaculum thermopropionicum (strain DSM 13744 / JCM 10971 / SI).